Consider the following 359-residue polypeptide: Histidinol-phosphate aminotransferase (359 aa).

Lys-217 is subject to N6-(pyridoxal phosphate)lysine.

The protein belongs to the class-II pyridoxal-phosphate-dependent aminotransferase family. Histidinol-phosphate aminotransferase subfamily. As to quaternary structure, homodimer. Requires pyridoxal 5'-phosphate as cofactor.

The catalysed reaction is L-histidinol phosphate + 2-oxoglutarate = 3-(imidazol-4-yl)-2-oxopropyl phosphate + L-glutamate. It functions in the pathway amino-acid biosynthesis; L-histidine biosynthesis; L-histidine from 5-phospho-alpha-D-ribose 1-diphosphate: step 7/9. The chain is Histidinol-phosphate aminotransferase from Salmonella enteritidis PT4 (strain P125109).